The following is a 443-amino-acid chain: Probable glycine dehydrogenase (decarboxylating) subunit 1 (443 aa).

This sequence belongs to the GcvP family. N-terminal subunit subfamily. As to quaternary structure, the glycine cleavage system is composed of four proteins: P, T, L and H. In this organism, the P 'protein' is a heterodimer of two subunits.

The catalysed reaction is N(6)-[(R)-lipoyl]-L-lysyl-[glycine-cleavage complex H protein] + glycine + H(+) = N(6)-[(R)-S(8)-aminomethyldihydrolipoyl]-L-lysyl-[glycine-cleavage complex H protein] + CO2. The glycine cleavage system catalyzes the degradation of glycine. The P protein binds the alpha-amino group of glycine through its pyridoxal phosphate cofactor; CO(2) is released and the remaining methylamine moiety is then transferred to the lipoamide cofactor of the H protein. The sequence is that of Probable glycine dehydrogenase (decarboxylating) subunit 1 from Maridesulfovibrio salexigens (strain ATCC 14822 / DSM 2638 / NCIMB 8403 / VKM B-1763) (Desulfovibrio salexigens).